The sequence spans 213 residues: N-(5'-phosphoribosyl)anthranilate isomerase (213 aa).

The protein belongs to the TrpF family.

It carries out the reaction N-(5-phospho-beta-D-ribosyl)anthranilate = 1-(2-carboxyphenylamino)-1-deoxy-D-ribulose 5-phosphate. The protein operates within amino-acid biosynthesis; L-tryptophan biosynthesis; L-tryptophan from chorismate: step 3/5. This is N-(5'-phosphoribosyl)anthranilate isomerase from Rhodopseudomonas palustris (strain ATCC BAA-98 / CGA009).